Here is a 535-residue protein sequence, read N- to C-terminus: Phosphoenolpyruvate carboxykinase (ATP) (535 aa).

Substrate-binding residues include arginine 59, tyrosine 201, and lysine 207. Residues lysine 207, histidine 226, and 243-251 (GLSGTGKTT) contribute to the ATP site. Mn(2+)-binding residues include lysine 207 and histidine 226. Aspartate 264 lines the Mn(2+) pocket. ATP contacts are provided by residues glutamate 292, arginine 328, 444–445 (RI), and threonine 450. Arginine 328 provides a ligand contact to substrate.

Belongs to the phosphoenolpyruvate carboxykinase (ATP) family. It depends on Mn(2+) as a cofactor.

The protein resides in the cytoplasm. The catalysed reaction is oxaloacetate + ATP = phosphoenolpyruvate + ADP + CO2. Its pathway is carbohydrate biosynthesis; gluconeogenesis. In terms of biological role, involved in the gluconeogenesis. Catalyzes the conversion of oxaloacetate (OAA) to phosphoenolpyruvate (PEP) through direct phosphoryl transfer between the nucleoside triphosphate and OAA. The chain is Phosphoenolpyruvate carboxykinase (ATP) from Porphyromonas gingivalis (strain ATCC 33277 / DSM 20709 / CIP 103683 / JCM 12257 / NCTC 11834 / 2561).